The primary structure comprises 671 residues: tRNA(Met) cytidine acetyltransferase TmcA (671 aa).

ATP-binding positions include Q180, 202-211 (GRGKSALAGQ), and R319. Residues 356–531 (QTLWQSDPET…SGCYTAMALL (176 aa)) enclose the N-acetyltransferase domain. Acetyl-CoA contacts are provided by residues 461–463 (IAV), 468–474 (QREGTGR), E499, and R506.

This sequence belongs to the RNA cytidine acetyltransferase family. TmcA subfamily.

It is found in the cytoplasm. The enzyme catalyses cytidine(34) in elongator tRNA(Met) + acetyl-CoA + ATP + H2O = N(4)-acetylcytidine(34) in elongator tRNA(Met) + ADP + phosphate + CoA + H(+). The catalysed reaction is 2-hydroxyisobutanoyl-CoA + L-lysyl-[protein] = N(6)-(2-hydroxyisobutanoyl)-L-lysyl-[protein] + CoA + H(+). ATP/GTP hydrolysis is stimulated by the addition of acetyl-CoA and tRNA(Met). Binding of acetyl-CoA to TmcA activates both ATPase and tRNA-binding activities. ATP promotes the 2-hydroxyisobutyryltransferase activity. Its function is as follows. Catalyzes the formation of N(4)-acetylcytidine (ac(4)C) at the wobble position of tRNA(Met), by using acetyl-CoA as an acetyl donor and ATP (or GTP). It recognizes the wobble base of tRNA(Met), thus distinguishing between tRNA(Met) and the structurally similar tRNA(Ile2). Could use an RNA helicase motor driven by ATP hydrolysis to deliver the wobble base of tRNA(Met) to the acetyltransferase domain of TmcA. In terms of biological role, also functions as a lysine 2-hydroxyisobutyryltransferase to regulate transcription. Can specifically catalyze the 2-hydroxyisobutyrylation (Khib) of the DNA-binding protein H-NS. Hydroxyisobutyrylation of H-NS decreases its DNA-binding activity, promotes the expression of acid-resistance genes and enhances bacterial survival under extreme acid stress. The chain is tRNA(Met) cytidine acetyltransferase TmcA from Escherichia coli (strain K12).